The chain runs to 194 residues: Imidazoleglycerol-phosphate dehydratase (194 aa).

The protein belongs to the imidazoleglycerol-phosphate dehydratase family.

The protein localises to the cytoplasm. The enzyme catalyses D-erythro-1-(imidazol-4-yl)glycerol 3-phosphate = 3-(imidazol-4-yl)-2-oxopropyl phosphate + H2O. Its pathway is amino-acid biosynthesis; L-histidine biosynthesis; L-histidine from 5-phospho-alpha-D-ribose 1-diphosphate: step 6/9. In Bacillus thuringiensis (strain Al Hakam), this protein is Imidazoleglycerol-phosphate dehydratase.